Consider the following 123-residue polypeptide: Large ribosomal subunit protein bL12 (123 aa).

This sequence belongs to the bacterial ribosomal protein bL12 family. As to quaternary structure, homodimer. Part of the ribosomal stalk of the 50S ribosomal subunit. Forms a multimeric L10(L12)X complex, where L10 forms an elongated spine to which 2 to 4 L12 dimers bind in a sequential fashion. Binds GTP-bound translation factors.

In terms of biological role, forms part of the ribosomal stalk which helps the ribosome interact with GTP-bound translation factors. Is thus essential for accurate translation. The protein is Large ribosomal subunit protein bL12 of Haemophilus influenzae (strain 86-028NP).